Reading from the N-terminus, the 117-residue chain is MSGENQETKAQEESSALEQKEIDDKVVSPEKSEEIKLKARYPNLGPKPGGSDFLRKRLQKGQKYFDSGDYNMAKAKMKNKQLPTAASDKTEVTGDHIPTPQDLPQRKPSLVASKLAG.

Basic and acidic residues predominate over residues 1 to 37 (MSGENQETKAQEESSALEQKEIDDKVVSPEKSEEIKL). The segment at 1 to 54 (MSGENQETKAQEESSALEQKEIDDKVVSPEKSEEIKLKARYPNLGPKPGGSDFL) is disordered. A Phosphoserine; by CDK2 modification is found at Ser28. A Phosphoserine; by GWL modification is found at Ser67. The segment at 78–117 (KNKQLPTAASDKTEVTGDHIPTPQDLPQRKPSLVASKLAG) is disordered. Thr99 carries the phosphothreonine; by CDK2 modification. Ser109 is subject to Phosphoserine; by PKA.

Belongs to the endosulfine family. Interacts (when phosphorylated at Ser-67) with ppp2r2d. Post-translationally, phosphorylation at Ser-67 by gwl during mitosis is essential for interaction with ppp2r2d (PR55-delta) and subsequent inactivation of PP2A. Phosphorylated by PKA.

It is found in the cytoplasm. Protein phosphatase inhibitor that specifically inhibits protein phosphatase 2A (PP2A) during mitosis. When phosphorylated at Ser-67 during mitosis, specifically interacts with ppp2r2d (PR55-delta) and inhibits its activity, leading to inactivation of PP2A, an essential condition to keep cyclin-B1-CDK1 activity high during M phase. This Xenopus laevis (African clawed frog) protein is cAMP-regulated phosphoprotein 19-A (arpp19-a).